A 335-amino-acid chain; its full sequence is UPF0324 membrane protein gbs1193 (335 aa).

9 helical membrane-spanning segments follow: residues 20-42 (SWLL…IGII), 57-79 (IAFT…LNLM), 84-106 (VGIS…AYVL), 116-138 (IATL…TAPV), 151-173 (SVIF…FIGL), 210-232 (GATI…LSIY), 253-275 (VLYF…SLRI), 285-304 (FFIV…SKLI), and 311-333 (ILLG…AILG).

Belongs to the UPF0324 family.

The protein localises to the cell membrane. This Streptococcus agalactiae serotype III (strain NEM316) protein is UPF0324 membrane protein gbs1193.